Reading from the N-terminus, the 106-residue chain is uncharacterized protein (106 aa).

This is an uncharacterized protein from Escherichia coli O157:H7.